The primary structure comprises 250 residues: UPF0246 protein cce_3295 (250 aa).

It belongs to the UPF0246 family.

The protein is UPF0246 protein cce_3295 of Crocosphaera subtropica (strain ATCC 51142 / BH68) (Cyanothece sp. (strain ATCC 51142)).